The sequence spans 152 residues: UPF0178 protein YE1167 (152 aa).

The protein belongs to the UPF0178 family.

This is UPF0178 protein YE1167 from Yersinia enterocolitica serotype O:8 / biotype 1B (strain NCTC 13174 / 8081).